A 164-amino-acid polypeptide reads, in one-letter code: Glutaredoxin-2, mitochondrial (164 aa).

The N-terminal 19 residues, 1–19 (MIWRRAALAGTRLVWSRSG), are a transit peptide targeting the mitochondrion. Position 20 is a phosphoserine (Ser-20). The Glutaredoxin domain occupies 57–157 (VNQIQETISD…PLVHQCYLKK (101 aa)). [2Fe-2S] cluster is bound at residue Cys-68. Lys-74 contributes to the glutathione binding site. Cys-77 is subject to S-glutathionyl cysteine; alternate. Cys-77 and Cys-80 are disulfide-bonded. The glutathione site is built by Gln-109 and Val-121. Cys-153 is a [2Fe-2S] cluster binding site.

Belongs to the glutaredoxin family. In terms of assembly, monomer; active form. Homodimer; inactive form. The homodimer is probably linked by 1 2Fe-2S cluster. As to expression, widely expressed. Expressed in brain, heart, skeletal muscle, colon, thymus, spleen, kidney, liver, small intestine, placenta and lung. Not expressed in peripheral blood leukocytes.

The protein localises to the mitochondrion. Its subcellular location is the nucleus. With respect to regulation, the 2Fe-2S present in the homodimer leads to inactivation of the enzyme. The 2Fe-2S may serve as a redox sensor: the presence of one-electron oxidants or reductants leading to the loss of the 2Fe-2S cluster, subsequent monomerization and activation of the enzyme. Unlike other glutaredoxins, it is not inhibited by oxidation of structural Cys residues. Glutathione-dependent oxidoreductase that facilitates the maintenance of mitochondrial redox homeostasis upon induction of apoptosis by oxidative stress. Involved in response to hydrogen peroxide and regulation of apoptosis caused by oxidative stress. Acts as a very efficient catalyst of monothiol reactions because of its high affinity for protein glutathione-mixed disulfides. Can receive electrons not only from glutathione (GSH), but also from thioredoxin reductase supporting both monothiol and dithiol reactions. Efficiently catalyzes both glutathionylation and deglutathionylation of mitochondrial complex I, which in turn regulates the superoxide production by the complex. Overexpression decreases the susceptibility to apoptosis and prevents loss of cardiolipin and cytochrome c release. The protein is Glutaredoxin-2, mitochondrial (GLRX2) of Homo sapiens (Human).